The chain runs to 130 residues: Small ribosomal subunit protein uS9 (130 aa).

This sequence belongs to the universal ribosomal protein uS9 family.

This is Small ribosomal subunit protein uS9 from Bacillus anthracis (strain A0248).